We begin with the raw amino-acid sequence, 244 residues long: Eukaryotic translation initiation factor 6 (244 aa).

Phosphoserine; by CK1 is present on residues S174 and S175.

The protein belongs to the eIF-6 family. In terms of assembly, monomer. Associates with the 60S ribosomal subunit. Post-translationally, phosphorylation at Ser-174 and Ser-175 promotes nuclear export.

Its subcellular location is the cytoplasm. The protein resides in the nucleus. It localises to the nucleolus. Binds to the 60S ribosomal subunit and prevents its association with the 40S ribosomal subunit to form the 80S initiation complex in the cytoplasm. Is also involved in ribosome biogenesis. Associates with pre-60S subunits in the nucleus and is involved in its nuclear export. The protein is Eukaryotic translation initiation factor 6 (tif6) of Schizosaccharomyces pombe (strain 972 / ATCC 24843) (Fission yeast).